Reading from the N-terminus, the 857-residue chain is Bifunctional levopimaradiene synthase, chloroplastic (857 aa).

The N-terminal 33 residues, 1-33 (MALPSSSLSSQIHTGATTQCIPHFHGSLNAGTS), are a transit peptide targeting the chloroplast. Lys257 lines the substrate pocket. Residues Asp390 and Asp392 each contribute to the Mg(2+) site. The DXDD motif signature appears at 390–393 (DIDD). Lys477 contacts substrate. Residues Asp609, Asp613, Asn753, Thr757, and Glu761 each contribute to the Mg(2+) site. The DDXXD motif motif lies at 609 to 613 (DDLYD).

It belongs to the terpene synthase family. Tpsd subfamily. The cofactor is Mg(2+).

It localises to the plastid. The protein localises to the chloroplast. The enzyme catalyses (2E,6E,10E)-geranylgeranyl diphosphate = (+)-copalyl diphosphate. The catalysed reaction is (+)-copalyl diphosphate = abieta-7,13-diene + diphosphate. It carries out the reaction (+)-copalyl diphosphate = abieta-8(14),12-diene + diphosphate. It catalyses the reaction (+)-copalyl diphosphate = neoabietadiene + diphosphate. It participates in terpene metabolism; oleoresin biosynthesis. Functionally, involved in defensive oleoresin formation in conifers in response to insect attack or other injury. Involved in diterpene (C20) olefins biosynthesis. Bifunctional enzyme that catalyzes two sequential cyclizations of geranylgeranyl diphosphate (GGPP) to levopimaradiene. Levopimaradiene is the major products of the enzyme with abietadiene and neoabietadiene. No activity with farnesyl diphosphate (FPP) as substrate. The chain is Bifunctional levopimaradiene synthase, chloroplastic from Pinus banksiana (Jack pine).